Reading from the N-terminus, the 957-residue chain is Glycine dehydrogenase (decarboxylating) (957 aa).

Position 708 is an N6-(pyridoxal phosphate)lysine (K708).

This sequence belongs to the GcvP family. The glycine cleavage system is composed of four proteins: P, T, L and H. It depends on pyridoxal 5'-phosphate as a cofactor.

The enzyme catalyses N(6)-[(R)-lipoyl]-L-lysyl-[glycine-cleavage complex H protein] + glycine + H(+) = N(6)-[(R)-S(8)-aminomethyldihydrolipoyl]-L-lysyl-[glycine-cleavage complex H protein] + CO2. In terms of biological role, the glycine cleavage system catalyzes the degradation of glycine. The P protein binds the alpha-amino group of glycine through its pyridoxal phosphate cofactor; CO(2) is released and the remaining methylamine moiety is then transferred to the lipoamide cofactor of the H protein. The polypeptide is Glycine dehydrogenase (decarboxylating) (Shigella boydii serotype 18 (strain CDC 3083-94 / BS512)).